A 230-amino-acid polypeptide reads, in one-letter code: Ureidoacrylate amidohydrolase RutB (230 aa).

Asp23 functions as the Proton acceptor in the catalytic mechanism. Residue Lys132 is part of the active site. Cys165 acts as the Nucleophile in catalysis.

The protein belongs to the isochorismatase family. RutB subfamily.

The enzyme catalyses (Z)-3-ureidoacrylate + H2O + H(+) = (Z)-3-aminoacrylate + NH4(+) + CO2. It catalyses the reaction (Z)-3-ureidoacrylate + H2O = (Z)-3-aminoacrylate + carbamate + H(+). The catalysed reaction is (Z)-2-methylureidoacrylate + H2O + H(+) = (Z)-2-methylaminoacrylate + NH4(+) + CO2. Its function is as follows. Hydrolyzes ureidoacrylate to form aminoacrylate and carbamate. The carbamate hydrolyzes spontaneously, thereby releasing one of the nitrogen atoms of the pyrimidine ring as ammonia and one of its carbon atoms as CO2. The polypeptide is Ureidoacrylate amidohydrolase RutB (Yersinia enterocolitica serotype O:8 / biotype 1B (strain NCTC 13174 / 8081)).